Reading from the N-terminus, the 128-residue chain is Holin-like protein CidA (128 aa).

Helical transmembrane passes span 4 to 24 (LLLT…INWV), 27 to 46 (ALHI…FTLL), 59 to 79 (GAAW…VGVI), and 88 to 108 (FGVS…VSTG).

This sequence belongs to the CidA/LrgA family. CidA subfamily.

It localises to the cell membrane. In terms of biological role, increases the activity of extracellular murein hydrolases possibly by mediating their export via hole formation. Inhibited by the antiholin-like proteins LrgAB. In an unstressed cell, the LrgAB products probably inhibit the function of the CidA protein. When a cell is stressed by the addition of antibiotics or by other factors in the environment, CidA possibly oligomerizes within the bacterial cell membrane, creating lesions that disrupt the proton motive force, which in turn results in loss of cell viability. These lesions are also hypothesized to regulate the subsequent cell lysis by either allowing the murein hydrolases access to the cell wall substrate and/or regulating their activity by a possible change in the cell wall pH that results from loss of membrane potential. This is Holin-like protein CidA from Bacillus velezensis (strain DSM 23117 / BGSC 10A6 / LMG 26770 / FZB42) (Bacillus amyloliquefaciens subsp. plantarum).